A 395-amino-acid polypeptide reads, in one-letter code: Flap endonuclease 1 (395 aa).

An N-domain region spans residues 1 to 104 (MGIKHLYQVI…GELAKRFMRK (104 aa)). Residue Asp34 coordinates Mg(2+). Residues Arg47 and Arg70 each contribute to the DNA site. Positions 86, 158, 160, 179, and 181 each coordinate Mg(2+). The segment at 122-253 (DVEKFSRRTV…NTALKLIRDH (132 aa)) is I-domain. DNA is bound at residue Glu158. 2 residues coordinate DNA: Gly231 and Asp233. Position 233 (Asp233) interacts with Mg(2+). The segment at 341-349 (QQSRLEGFF) is interaction with PCNA. Residues 357-389 (QEKATLKRKHEEKLELQKKKKKEEAKAKKEAKS) are compositionally biased toward basic and acidic residues. The tract at residues 357–395 (QEKATLKRKHEEKLELQKKKKKEEAKAKKEAKSKPRGAV) is disordered.

The protein belongs to the XPG/RAD2 endonuclease family. FEN1 subfamily. In terms of assembly, interacts with PCNA. Three molecules of FEN1 bind to one PCNA trimer with each molecule binding to one PCNA monomer. PCNA stimulates the nuclease activity without altering cleavage specificity. Mg(2+) serves as cofactor. Phosphorylated. Phosphorylation upon DNA damage induces relocalization to the nuclear plasma.

The protein resides in the nucleus. It localises to the nucleolus. Its subcellular location is the nucleoplasm. It is found in the mitochondrion. Functionally, structure-specific nuclease with 5'-flap endonuclease and 5'-3' exonuclease activities involved in DNA replication and repair. During DNA replication, cleaves the 5'-overhanging flap structure that is generated by displacement synthesis when DNA polymerase encounters the 5'-end of a downstream Okazaki fragment. It enters the flap from the 5'-end and then tracks to cleave the flap base, leaving a nick for ligation. Also involved in the long patch base excision repair (LP-BER) pathway, by cleaving within the apurinic/apyrimidinic (AP) site-terminated flap. Acts as a genome stabilization factor that prevents flaps from equilibrating into structures that lead to duplications and deletions. Also possesses 5'-3' exonuclease activity on nicked or gapped double-stranded DNA, and exhibits RNase H activity. Also involved in replication and repair of rDNA and in repairing mitochondrial DNA. This chain is Flap endonuclease 1, found in Ajellomyces dermatitidis (strain ER-3 / ATCC MYA-2586) (Blastomyces dermatitidis).